The sequence spans 320 residues: Nodulation efficiency protein NfeD (320 aa).

The protein belongs to the ornithine cyclodeaminase/mu-crystallin family.

Functionally, seems to be involved in the nodulation efficiency of R.meliloti GR4 on alfalfa roots. This chain is Nodulation efficiency protein NfeD, found in Rhizobium meliloti (Ensifer meliloti).